The following is a 59-amino-acid chain: Putative potassium channel toxin Ts22 (59 aa).

Positions 1–22 (MKAFYGILIIFILISMIDLSQQ) are cleaved as a signal peptide. Intrachain disulfides connect Cys-29–Cys-50, Cys-35–Cys-55, and Cys-39–Cys-57.

The protein belongs to the short scorpion toxin superfamily. Potassium channel inhibitor family. Alpha-KTx 04 subfamily. As to expression, expressed by the venom gland.

It is found in the secreted. Its function is as follows. Potently blocks voltage-gated potassium channels (Kv). The polypeptide is Putative potassium channel toxin Ts22 (Tityus serrulatus (Brazilian scorpion)).